Reading from the N-terminus, the 208-residue chain is Small ribosomal subunit protein bS6 (208 aa).

2 disordered regions span residues 121 to 143 (SENN…KPRL) and 185 to 208 (NQQT…GAKP). Residues 185-195 (NQQTSQANNNQ) are compositionally biased toward low complexity.

The protein belongs to the bacterial ribosomal protein bS6 family.

Its function is as follows. Binds together with bS18 to 16S ribosomal RNA. In Mycoplasma genitalium (strain ATCC 33530 / DSM 19775 / NCTC 10195 / G37) (Mycoplasmoides genitalium), this protein is Small ribosomal subunit protein bS6 (rpsF).